The chain runs to 270 residues: L-fucose dehydrogenase (270 aa).

NAD(+) contacts are provided by R19, I21, D40, K41, D62, V63, N89, Y154, K158, I187, T189, and L191. Y154 serves as the catalytic Proton acceptor.

The protein belongs to the short-chain dehydrogenases/reductases (SDR) family. In terms of assembly, homotetramer. Detected in retina.

The protein localises to the cytoplasm. The enzyme catalyses L-fucose + NAD(+) = L-fucono-1,5-lactone + NADH + H(+). The catalysed reaction is D-arabinose + NAD(+) = D-arabinono-1,5-lactone + NADH + H(+). It carries out the reaction L-galactose + NAD(+) = L-galactono-1,5-lactone + NADH + H(+). It participates in carbohydrate degradation; L-fucose degradation. Catalyzes the NAD(+)-dependent oxidation of L-fucose, yielding L-fucono-1,5-lactone, which rapidly converts spontaneously to L-fucone-1,4-lactone. Can also act on D-arabinose and L-galactose, with lower catalytic efficiency. Does not use NADPH. May be the initial enzyme of the putative L-fucose degradation pathway in mammals. The protein is L-fucose dehydrogenase (HSD17B14) of Bos taurus (Bovine).